Here is a 350-residue protein sequence, read N- to C-terminus: MSNSWWLKPAQAIDVPMREAALARQQQLTKPAGSLAQLERLAVQLSGLQGRERPAADKLWIAIFAGDHGVVAEGVSAYPQEVTGQMLHNFVNGGAAISVLARQLSAQLDVVDLGTVSPMDLPGVRHLRIGAGTANFVDGPAMTVEQGLAALQAGRDSVLRAKAVGTELFIGGEMGIGNTAAASAVACSVLECAAPLLVGPGTGLNAEGIVHKTRVIERALALHAEHAGDPLQSLFCLGGFEIAALTGAYLACAQEGIVAMVDGFICSVAALVAVRLNPSCRDWLLFGHRGAEPGHRHLLETLQAEPLLDLGLRLGEGSGAALAVPLVRLACELHNGMATFAEAAVADRPA.

The active-site Proton acceptor is the Glu-316.

This sequence belongs to the CobT family.

The catalysed reaction is 5,6-dimethylbenzimidazole + nicotinate beta-D-ribonucleotide = alpha-ribazole 5'-phosphate + nicotinate + H(+). The protein operates within nucleoside biosynthesis; alpha-ribazole biosynthesis; alpha-ribazole from 5,6-dimethylbenzimidazole: step 1/2. Catalyzes the synthesis of alpha-ribazole-5'-phosphate from nicotinate mononucleotide (NAMN) and 5,6-dimethylbenzimidazole (DMB). This is Nicotinate-nucleotide--dimethylbenzimidazole phosphoribosyltransferase from Pseudomonas syringae pv. tomato (strain ATCC BAA-871 / DC3000).